A 242-amino-acid chain; its full sequence is Ribonuclease PH (242 aa).

Residues Arg89 and 127-129 each bind phosphate; that span reads GTR.

This sequence belongs to the RNase PH family. Homohexameric ring arranged as a trimer of dimers.

The enzyme catalyses tRNA(n+1) + phosphate = tRNA(n) + a ribonucleoside 5'-diphosphate. Functionally, phosphorolytic 3'-5' exoribonuclease that plays an important role in tRNA 3'-end maturation. Removes nucleotide residues following the 3'-CCA terminus of tRNAs; can also add nucleotides to the ends of RNA molecules by using nucleoside diphosphates as substrates, but this may not be physiologically important. Probably plays a role in initiation of 16S rRNA degradation (leading to ribosome degradation) during starvation. The protein is Ribonuclease PH of Neisseria gonorrhoeae (strain ATCC 700825 / FA 1090).